A 168-amino-acid polypeptide reads, in one-letter code: uncharacterized protein (168 aa).

2 helical membrane-spanning segments follow: residues Asn27 to Gly47 and Ile147 to Phe167.

It localises to the membrane. This is an uncharacterized protein from Saccharomyces cerevisiae (strain ATCC 204508 / S288c) (Baker's yeast).